Here is a 937-residue protein sequence, read N- to C-terminus: Protein SEY1 homolog (937 aa).

Over 1–848 (MEKGVEKTQI…ETGSKMSLKN (848 aa)) the chain is Cytoplasmic. Residues 34-280 (GFSYNVIAVL…IPSDGFAQYC (247 aa)) form the GB1/RHD3-type G domain. A GTP-binding site is contributed by 44-51 (GSQSSGKS). Coiled-coil stretches lie at residues 319-339 (NKEIKEKSIESHNKVIENFKE) and 725-750 (YLDEIMDVLKNKLDEISENLATIIIQ). A helical membrane pass occupies residues 849 to 869 (VPVVFWIILLLFGWNEILFFI). Residues 870-872 (RMF) lie on the Lumenal side of the membrane. Residues 873–893 (FKLNVILPLFFAAAFIVSTFV) traverse the membrane as a helical segment. The Cytoplasmic portion of the chain corresponds to 894-937 (YNGNTQALSYINKIIFYMAKNSYNFFKHIQAISNPPPKNVQKQE).

Belongs to the TRAFAC class dynamin-like GTPase superfamily. GB1/RHD3 GTPase family. RHD3 subfamily.

The protein resides in the endoplasmic reticulum membrane. Probable GTP-binding protein involved in generating and maintaining the structure of the tubular endoplasmic reticulum network. The chain is Protein SEY1 homolog from Plasmodium falciparum (isolate 3D7).